The sequence spans 452 residues: NADH-ubiquinone oxidoreductase chain 4 (452 aa).

Helical transmembrane passes span 4–24, 29–49, 59–79, 88–110, 114–136, 144–164, 182–202, 221–241, 252–272, 282–304, 309–331, 345–365, 390–410, and 432–452; these read LVLG…SMVW, VGSV…MTIS, FVSL…LLAS, LIYQ…LAFM, LLLF…TRWG, AGTY…ICLI, VFQL…AFLV, PIAG…YGMM, MLSS…MGGI, LIAY…GVAW, AMVL…NLWY, LIMI…MNMA, IVYM…LFGM, and LLTT…GLMF.

It belongs to the complex I subunit 4 family.

The protein resides in the mitochondrion membrane. The enzyme catalyses a ubiquinone + NADH + 5 H(+)(in) = a ubiquinol + NAD(+) + 4 H(+)(out). Functionally, core subunit of the mitochondrial membrane respiratory chain NADH dehydrogenase (Complex I) that is believed to belong to the minimal assembly required for catalysis. Complex I functions in the transfer of electrons from NADH to the respiratory chain. The immediate electron acceptor for the enzyme is believed to be ubiquinone. The chain is NADH-ubiquinone oxidoreductase chain 4 (ND4) from Branchiostoma floridae (Florida lancelet).